A 513-amino-acid polypeptide reads, in one-letter code: Aspartyl protease family protein 1 (513 aa).

An N-terminal signal peptide occupies residues 1–21; the sequence is MVWYSSCRILFLGLLILLASS. Positions 104-445 constitute a Peptidase A1 domain; the sequence is HYANVTVGTP…DREKLILGWK (342 aa). Residues Asp-122 and Asp-327 contribute to the active site. The segment at 452 to 488 is disordered; sequence GETSARTLPSNRSSSSARPPASSFDPEATNIPSQRPN. Residues 455–474 are compositionally biased toward low complexity; that stretch reads SARTLPSNRSSSSARPPASS. Residue Ser-484 is the site of GPI-anchor amidated serine attachment. A propeptide spans 485-513 (removed in mature form); that stretch reads QRPNTSTTSAAYSLSISLSLFFFSILAIL.

It belongs to the peptidase A1 family.

It localises to the cell membrane. Its function is as follows. Aspartyl protease. Not able to cleave BAG6. The chain is Aspartyl protease family protein 1 from Arabidopsis thaliana (Mouse-ear cress).